Consider the following 415-residue polypeptide: Multifunctional CCA protein (415 aa).

ATP is bound by residues G8 and R11. The CTP site is built by G8 and R11. The Mg(2+) site is built by D21 and D23. Residues R91, R137, and R140 each contribute to the ATP site. Positions 91, 137, and 140 each coordinate CTP. The HD domain maps to 228–329 (TGIHTLMTLA…VGLFDSIDAW (102 aa)).

The protein belongs to the tRNA nucleotidyltransferase/poly(A) polymerase family. Bacterial CCA-adding enzyme type 1 subfamily. Monomer. Can also form homodimers and oligomers. It depends on Mg(2+) as a cofactor. Ni(2+) serves as cofactor.

The enzyme catalyses a tRNA precursor + 2 CTP + ATP = a tRNA with a 3' CCA end + 3 diphosphate. It carries out the reaction a tRNA with a 3' CCA end + 2 CTP + ATP = a tRNA with a 3' CCACCA end + 3 diphosphate. Catalyzes the addition and repair of the essential 3'-terminal CCA sequence in tRNAs without using a nucleic acid template. Adds these three nucleotides in the order of C, C, and A to the tRNA nucleotide-73, using CTP and ATP as substrates and producing inorganic pyrophosphate. tRNA 3'-terminal CCA addition is required both for tRNA processing and repair. Also involved in tRNA surveillance by mediating tandem CCA addition to generate a CCACCA at the 3' terminus of unstable tRNAs. While stable tRNAs receive only 3'-terminal CCA, unstable tRNAs are marked with CCACCA and rapidly degraded. This Cronobacter sakazakii (strain ATCC BAA-894) (Enterobacter sakazakii) protein is Multifunctional CCA protein.